Reading from the N-terminus, the 403-residue chain is MTESTFPQYPRLILSKGREKSLLRRHPWVFSGAVSRLEGKANLGETIDIVDHQGKWLARGAWSPASQIRARVWTFDKAESIDIAFFTRRLRQAQQWRDWLAKKDGLDSYRLIAGESDGLPGVTIDRFGHFLVLQLLSAGAEYQRAALISALQTCYPDCAIYDRSDVAVRKKEGMALTQGPVTGELPPALLPIEEYGMKLLVDIQGGHKTGYYLDQRDSRLATRRYVENQRVLNCFSYTGGFAVSALMGGCRQVVSVDTSQDALDIARQNVELNQLDLSKAEFVRDDVFKLLRAYREHGEKFDVIIMDPPKFVENKSQLMGACRGYKDINMLAIQLLNPGGILLTFSCSGLMTSDLFQKIIADAAIDAGRDVQFIEQFRQAADHPVIATYPEGLYLKGFACRVM.

The 80-residue stretch at 9–88 (YPRLILSKGR…ESIDIAFFTR (80 aa)) folds into the PUA domain.

It belongs to the methyltransferase superfamily. RlmI family.

It localises to the cytoplasm. It carries out the reaction cytidine(1962) in 23S rRNA + S-adenosyl-L-methionine = 5-methylcytidine(1962) in 23S rRNA + S-adenosyl-L-homocysteine + H(+). Functionally, specifically methylates the cytosine at position 1962 (m5C1962) of 23S rRNA. The polypeptide is Ribosomal RNA large subunit methyltransferase I (Salmonella paratyphi C (strain RKS4594)).